The sequence spans 181 residues: Thioredoxin-like protein CITRX1, chloroplastic (181 aa).

The segment at 1 to 20 (MQAATLSFHPSAPPPQTSAC) is disordered. Residues 1–70 (MQAATLSFHP…PAVATGKYVR (70 aa)) constitute a chloroplast transit peptide. Residues 71 to 181 (EDYLVKKVSA…MMRDIINNDL (111 aa)) enclose the Thioredoxin domain. Residues Cys104 and Cys107 each act as nucleophile in the active site. Cys104 and Cys107 are joined by a disulfide.

Belongs to the thioredoxin family. Plant CITRX-type subfamily.

Its subcellular location is the plastid. It is found in the chloroplast. Its function is as follows. Probable thiol-disulfide oxidoreductase that may play a role in proper chloroplast development. This chain is Thioredoxin-like protein CITRX1, chloroplastic, found in Nicotiana benthamiana.